The following is a 330-amino-acid chain: MTLIVTGAAGFIGANIVKALNERGETRIIAVDNLTRADKFKNLVDCEIDDYLDKTEFVERFARGDFGKVRAVFHEGACSDTMETDGRYMMDNNFRYSRAVLDACLAQGTQFLYASSAAIYGGSSRFVEAREFEAPLNVYGYSKFLFDQVIRRVMPSAKSQIAGFRYFNVYGPRESHKGRMASVAFHNFNQFRAEGKVKLFGEYNGYGPGEQTRDFVSVEDVAKVNLHFFDHPQKSGIFNLGTGRAQPFNDIATTVVNTLRALEGQPALTLAEQVEQGLVEYVPFPDALRGKYQCFTQADQTTLRAAGYDAPFLTVQEGVDRYVRWLFGQL.

NADP(+) contacts are provided by residues 11 to 12 (FI), 32 to 33 (DN), Lys39, Lys54, 75 to 79 (EGACS), and Asn92. Residue Tyr139 is the Proton acceptor of the active site. Lys143 serves as a coordination point for NADP(+). Asn168 is a binding site for substrate. Residues Val169 and Lys177 each coordinate NADP(+). Lys177 (proton acceptor) is an active-site residue. Residues Arg179, His186, 200-203 (FGEY), Arg213, and Tyr292 each bind substrate.

It belongs to the NAD(P)-dependent epimerase/dehydratase family. HldD subfamily. In terms of assembly, homopentamer. It depends on NADP(+) as a cofactor.

It catalyses the reaction ADP-D-glycero-beta-D-manno-heptose = ADP-L-glycero-beta-D-manno-heptose. It functions in the pathway nucleotide-sugar biosynthesis; ADP-L-glycero-beta-D-manno-heptose biosynthesis; ADP-L-glycero-beta-D-manno-heptose from D-glycero-beta-D-manno-heptose 7-phosphate: step 4/4. Functionally, catalyzes the interconversion between ADP-D-glycero-beta-D-manno-heptose and ADP-L-glycero-beta-D-manno-heptose via an epimerization at carbon 6 of the heptose. The polypeptide is ADP-L-glycero-D-manno-heptose-6-epimerase (Burkholderia pseudomallei (strain K96243)).